The following is a 2069-amino-acid chain: Dedicator of cytokinesis protein 9 (2069 aa).

4 positions are modified to phosphoserine: Ser21, Ser32, Ser167, and Ser170. The 108-residue stretch at 174-281 (GITKHGWLYK…WITILNKILQ (108 aa)) folds into the PH domain. Residues 290-313 (EKRNGDSHEDDEQSKLEGSGSGLD) form a disordered region. A phosphoserine mark is found at Ser433 and Ser443. The 179-residue stretch at 640–818 (TNHLYVYPKY…PLLKISTHLV (179 aa)) folds into the C2 DOCK-type domain. 2 positions are modified to phosphoserine: Ser927 and Ser1235. Thr1241 carries the phosphothreonine modification. Residues 1241–1282 (TPNINSVRNADSRGSLISTDSGNSLPERNSEKSNSLDKHQQS) form a disordered region. A phosphoserine mark is found at Ser1255, Ser1261, and Ser1264. Residues 1255 to 1267 (SLISTDSGNSLPE) are compositionally biased toward polar residues. Residues 1268-1280 (RNSEKSNSLDKHQ) show a composition bias toward basic and acidic residues. Residues 1605 to 2069 (KSYASTPELR…LSEIMHEQLG (465 aa)) form the DOCKER domain. The interaction with CDC42 stretch occupies residues 1693–2069 (DEEASMMEDV…LSEIMHEQLG (377 aa)). 2 coiled-coil regions span residues 1948 to 1982 (IEVA…KLQG) and 2034 to 2067 (NERL…MHEQ).

Belongs to the DOCK family. Homodimer. Interacts preferentially with nucleotide-depleted CDC42. Widely expressed, with highest expression in heart and placenta. Expressed at intermediate level in kidney, brain, lung and skeletal muscle.

The protein localises to the endomembrane system. In terms of biological role, guanine nucleotide-exchange factor (GEF) that activates CDC42 by exchanging bound GDP for free GTP. Overexpression induces filopodia formation. This is Dedicator of cytokinesis protein 9 from Homo sapiens (Human).